A 353-amino-acid chain; its full sequence is Basic membrane protein C (353 aa).

An N-terminal signal peptide occupies residues 1 to 16 (MFKRFIFITLSLLVFA). Residue cysteine 17 is the site of N-palmitoyl cysteine attachment. Cysteine 17 carries the S-diacylglycerol cysteine lipid modification.

The protein belongs to the BMP lipoprotein family. Monomer.

The protein resides in the cell inner membrane. Its function is as follows. May be part of an ABC-type nucleoside uptake system involved in the purine salvage pathway. The protein is Basic membrane protein C (bmpC) of Borreliella burgdorferi (strain ATCC 35210 / DSM 4680 / CIP 102532 / B31) (Borrelia burgdorferi).